Reading from the N-terminus, the 499-residue chain is Cysteine--tRNA ligase (499 aa).

Zn(2+) is bound at residue Cys-31. Positions 33–43 (VTVYDLCHLGH) match the 'HIGH' region motif. Zn(2+) is bound by residues Cys-215, His-240, and Glu-244. Residues 272-276 (KMSKS) carry the 'KMSKS' region motif. Lys-275 lines the ATP pocket.

This sequence belongs to the class-I aminoacyl-tRNA synthetase family. In terms of assembly, monomer. It depends on Zn(2+) as a cofactor.

It localises to the cytoplasm. The catalysed reaction is tRNA(Cys) + L-cysteine + ATP = L-cysteinyl-tRNA(Cys) + AMP + diphosphate. The protein is Cysteine--tRNA ligase of Synechococcus sp. (strain WH7803).